A 612-amino-acid chain; its full sequence is Zinc metalloproteinase nas-36 (612 aa).

An N-terminal signal peptide occupies residues 1 to 16 (MLLLVLLFVFISATNA). N-linked (GlcNAc...) asparagine glycosylation occurs at Asn-15. Positions 17–122 (SDVGRRELEK…KSKPNVRGRR (106 aa)) are excised as a propeptide. In terms of domain architecture, Peptidase M12A spans 123 to 320 (SFDASPESKW…IETINKAYCS (198 aa)). The N-linked (GlcNAc...) asparagine glycan is linked to Asn-163. 8 disulfides stabilise this stretch: Cys-166–Cys-319, Cys-190–Cys-209, Cys-329–Cys-343, Cys-345–Cys-354, Cys-365–Cys-394, Cys-515–Cys-546, Cys-519–Cys-551, and Cys-531–Cys-536. His-217 contributes to the Zn(2+) binding site. Glu-218 is a catalytic residue. Zn(2+) is bound by residues His-221 and His-227. The region spanning 320–355 (SDRCSGSNDCKNGGYPHPKQCDTCLCPNGLSGPKCE) is the EGF-like domain. The region spanning 365–478 (CGGKIVVKEE…VGFKLQARAT (114 aa)) is the CUB domain. The TSP type-1 domain occupies 503–552 (TDQWAEWGSWSQCSRSCGGCGIMSRVRVCRTKQCKGRRQEFSTCNLKACP).

Requires Zn(2+) as cofactor.

Its subcellular location is the secreted. Inhibited by 1,10-phenanthroline. Functionally, metalloprotease. Involved in molting, a process during larval stages in which a new cuticle is formed and the old cuticle is shed. This is Zinc metalloproteinase nas-36 from Haemonchus contortus (Barber pole worm).